A 238-amino-acid polypeptide reads, in one-letter code: Ribose-5-phosphate isomerase A (238 aa).

Residues 30 to 33, 87 to 90, and 100 to 103 each bind substrate; these read SGST, DGAD, and KGGG. The active-site Proton acceptor is Glu109. Lys127 lines the substrate pocket.

It belongs to the ribose 5-phosphate isomerase family. As to quaternary structure, homodimer.

It carries out the reaction aldehydo-D-ribose 5-phosphate = D-ribulose 5-phosphate. It participates in carbohydrate degradation; pentose phosphate pathway; D-ribose 5-phosphate from D-ribulose 5-phosphate (non-oxidative stage): step 1/1. Catalyzes the reversible conversion of ribose-5-phosphate to ribulose 5-phosphate. The chain is Ribose-5-phosphate isomerase A from Prochlorococcus marinus (strain MIT 9303).